The following is a 695-amino-acid chain: Probable Rho-GTPase-activating protein 7 (695 aa).

Over residues 1 to 11 (MLSAPSSSTTP) the composition is skewed to low complexity. The tract at residues 1–26 (MLSAPSSSTTPASPPTSPPNTTSSDD) is disordered. The F-BAR domain maps to 33-307 (PKVEAILNSE…ALDNINANTD (275 aa)). Residues 320–499 (EDNKNPTDAS…SVSPQPSSPT (180 aa)) are disordered. Polar residues-rich tracts occupy residues 336-348 (PPSSYGTGSSAGK) and 366-382 (PLQNTNPAPSTFPNPSV). 3 stretches are compositionally biased toward low complexity: residues 383–432 (ASPA…RTSS), 458–467 (PIQTTTIQTS), and 488–499 (PTSVSPQPSSPT). Residues serine 496 and serine 497 each carry the phosphoserine modification. Residues 506 to 692 (ARLDAIILRE…ILIDYCFTIF (187 aa)) enclose the Rho-GAP domain.

The chain is Probable Rho-GTPase-activating protein 7 (rga7) from Schizosaccharomyces pombe (strain 972 / ATCC 24843) (Fission yeast).